Consider the following 588-residue polypeptide: Tetratricopeptide repeat protein 39B (588 aa).

TPR repeat units follow at residues 294-327, 485-518, and 526-559; these read SIILFYAARIDILKGRFEQAQETFQKCIVSQQEW, CLVQLLKGVCLKHLGRLLQAELCFNQVIQSEKRV, and PFTFYELGLLYKDQGDRDKAIRYIETAKSNYKDY.

It belongs to the TTC39 family.

Its function is as follows. May be involved in lipid metabolism. The chain is Tetratricopeptide repeat protein 39B (ttc39b) from Xenopus tropicalis (Western clawed frog).